We begin with the raw amino-acid sequence, 79 residues long: MKTLLLTLVMVTIMCLDLGYTLTCYKGYHDTVVCKPHETICYRYLVPATHGNAIPARGCGTSCPGGNHPVCCSTDLCNK.

A signal peptide spans 1–21 (MKTLLLTLVMVTIMCLDLGYT). Cystine bridges form between Cys-24/Cys-41, Cys-34/Cys-59, Cys-63/Cys-71, and Cys-72/Cys-77.

It belongs to the three-finger toxin family. Short-chain subfamily. Type III alpha-neurotoxin sub-subfamily. Expressed by the venom gland.

The protein resides in the secreted. In terms of biological role, binds with high affinity to muscle nicotinic acetylcholine receptor (nAChR) and hinders acetylcholine binding to the receptor, thereby impairing neuromuscular transmission. Competes with the binding of alpha-bungarotoxin on muscle AChR (from Torpedo) with an IC(50) of 0.30 uM. Causes muscle paralysis, spasms and increased respiration. The sequence is that of Short neurotoxin 3 from Pseudonaja textilis (Eastern brown snake).